The following is a 427-amino-acid chain: Adenylosuccinate synthetase (427 aa).

GTP contacts are provided by residues 12–18 (GDEGKGK) and 40–42 (GHT). Aspartate 13 (proton acceptor) is an active-site residue. Aspartate 13 and glycine 40 together coordinate Mg(2+). Residues 13-16 (DEGK), 38-41 (NAGH), threonine 128, arginine 142, glutamine 223, threonine 238, and arginine 302 each bind IMP. The Proton donor role is filled by histidine 41. Residue 298 to 304 (TTTGRPR) coordinates substrate. GTP contacts are provided by residues arginine 304, 330 to 332 (SID), and 412 to 414 (SVG).

The protein belongs to the adenylosuccinate synthetase family. In terms of assembly, homodimer. It depends on Mg(2+) as a cofactor.

It is found in the cytoplasm. The catalysed reaction is IMP + L-aspartate + GTP = N(6)-(1,2-dicarboxyethyl)-AMP + GDP + phosphate + 2 H(+). The protein operates within purine metabolism; AMP biosynthesis via de novo pathway; AMP from IMP: step 1/2. Plays an important role in the de novo pathway of purine nucleotide biosynthesis. Catalyzes the first committed step in the biosynthesis of AMP from IMP. This is Adenylosuccinate synthetase from Staphylococcus aureus (strain N315).